Consider the following 165-residue polypeptide: Glycine cleavage system H protein, mitochondrial (165 aa).

Residues 57-139 (NAIVGISSYA…YEKGWLFKVD (83 aa)) enclose the Lipoyl-binding domain. Lysine 98 is subject to N6-lipoyllysine.

Belongs to the GcvH family. The glycine cleavage system is composed of four proteins: P, T, L and H. (R)-lipoate is required as a cofactor.

The protein resides in the mitochondrion. In terms of biological role, the glycine cleavage system catalyzes the degradation of glycine. The H protein shuttles the methylamine group of glycine from the P protein to the T protein. The polypeptide is Glycine cleavage system H protein, mitochondrial (ppl) (Drosophila melanogaster (Fruit fly)).